Consider the following 132-residue polypeptide: L-ectoine synthase (132 aa).

It belongs to the ectoine synthase family.

It carries out the reaction (2S)-4-acetamido-2-aminobutanoate = L-ectoine + H2O. It functions in the pathway amine and polyamine biosynthesis; ectoine biosynthesis; L-ectoine from L-aspartate 4-semialdehyde: step 3/3. Catalyzes the circularization of gamma-N-acetyl-alpha,gamma-diaminobutyric acid (ADABA) to ectoine (1,4,5,6-tetrahydro-2-methyl-4-pyrimidine carboxylic acid), which is an excellent osmoprotectant. This is L-ectoine synthase from Rhodococcus jostii (strain RHA1).